We begin with the raw amino-acid sequence, 239 residues long: Phosducin-like protein 3 (239 aa).

Met-1 is subject to N-acetylmethionine. The Phosducin domain maps to 32–180 (EAEEEQRILQ…EGDIKAQFIG (149 aa)). Ser-43, Ser-234, and Ser-236 each carry phosphoserine. The segment at 91-239 (FGEVLEISGK…MKRDSDSEGD (149 aa)) is thioredoxin fold.

The protein belongs to the phosducin family. Interacts (via thioredoxin fold region) with KDR/VEGFR2 (via juxtamembrane domain). Forms ternary complexes with the chaperonin CCT complex and actin substrate, leading to inhibition of actin folding. Interacts with XIAP (via BIR 3 and RING domain). Interacts with HSP90AA1 and HSP90AB1. N-terminal methionine acetylation destabilizes the protein.

The protein localises to the cytoplasm. It is found in the perinuclear region. The protein resides in the endoplasmic reticulum. Acts as a chaperone for the angiogenic VEGF receptor KDR/VEGFR2, increasing its abundance by inhibiting its ubiquitination and degradation. Inhibits the folding activity of the chaperonin-containing T-complex (CCT) which leads to inhibition of cytoskeletal actin folding. Acts as a chaperone during heat shock alongside HSP90 and HSP40/70 chaperone complexes. Modulates the activation of caspases during apoptosis. The sequence is that of Phosducin-like protein 3 (PDCL3) from Pongo abelii (Sumatran orangutan).